A 221-amino-acid chain; its full sequence is Small ribosomal subunit protein uS3c (221 aa).

Positions 39-109 (LRDYLKTRLA…RVIVHVVEIA (71 aa)) constitute a KH type-2 domain.

Belongs to the universal ribosomal protein uS3 family. As to quaternary structure, part of the 30S ribosomal subunit.

Its subcellular location is the plastid. The protein localises to the chloroplast. The chain is Small ribosomal subunit protein uS3c (rps3) from Nephroselmis olivacea (Green alga).